Consider the following 147-residue polypeptide: UPF0306 protein YhbP (147 aa).

The protein belongs to the UPF0306 family.

This is UPF0306 protein YhbP from Escherichia coli O157:H7 (strain EC4115 / EHEC).